The chain runs to 407 residues: Na(+)-translocating NADH-quinone reductase subunit F (407 aa).

A helical transmembrane segment spans residues 6–26 (IFLAIGMFTAIVLGLVAIILV). In terms of domain architecture, 2Fe-2S ferredoxin-type spans 35–127 (GDVTIQINGE…DMQIRVPEEV (93 aa)). Positions 70, 76, 79, and 111 each coordinate [2Fe-2S] cluster. Positions 130–269 (VKKWECTVES…YGPFGEFFAK (140 aa)) constitute an FAD-binding FR-type domain.

Belongs to the NqrF family. As to quaternary structure, composed of six subunits; NqrA, NqrB, NqrC, NqrD, NqrE and NqrF. It depends on [2Fe-2S] cluster as a cofactor. FAD is required as a cofactor.

Its subcellular location is the cell inner membrane. The enzyme catalyses a ubiquinone + n Na(+)(in) + NADH + H(+) = a ubiquinol + n Na(+)(out) + NAD(+). NQR complex catalyzes the reduction of ubiquinone-1 to ubiquinol by two successive reactions, coupled with the transport of Na(+) ions from the cytoplasm to the periplasm. The first step is catalyzed by NqrF, which accepts electrons from NADH and reduces ubiquinone-1 to ubisemiquinone by a one-electron transfer pathway. This Pseudomonas aeruginosa (strain UCBPP-PA14) protein is Na(+)-translocating NADH-quinone reductase subunit F.